We begin with the raw amino-acid sequence, 361 residues long: Ribosomal RNA large subunit methyltransferase M (361 aa).

S-adenosyl-L-methionine is bound by residues S187, 220-223 (CPGG), D239, D259, and D276. K305 serves as the catalytic Proton acceptor.

This sequence belongs to the class I-like SAM-binding methyltransferase superfamily. RNA methyltransferase RlmE family. RlmM subfamily. In terms of assembly, monomer.

Its subcellular location is the cytoplasm. The enzyme catalyses cytidine(2498) in 23S rRNA + S-adenosyl-L-methionine = 2'-O-methylcytidine(2498) in 23S rRNA + S-adenosyl-L-homocysteine + H(+). Its function is as follows. Catalyzes the 2'-O-methylation at nucleotide C2498 in 23S rRNA. This is Ribosomal RNA large subunit methyltransferase M from Shewanella baltica (strain OS185).